Reading from the N-terminus, the 394-residue chain is Ribulose bisphosphate carboxylase large chain (394 aa).

At Lys5 the chain carries N6,N6,N6-trimethyllysine. Asn114 and Thr164 together coordinate substrate. Lys166 functions as the Proton acceptor in the catalytic mechanism. Residue Lys168 participates in substrate binding. Residues Lys192, Asp194, and Glu195 each contribute to the Mg(2+) site. Lys192 bears the N6-carboxylysine mark. His285 acts as the Proton acceptor in catalysis. Residues Arg286, His318, and Ser370 each coordinate substrate.

This sequence belongs to the RuBisCO large chain family. Type I subfamily. As to quaternary structure, heterohexadecamer of 8 large chains and 8 small chains. It depends on Mg(2+) as a cofactor.

It localises to the plastid. The protein localises to the chloroplast. It catalyses the reaction 2 (2R)-3-phosphoglycerate + 2 H(+) = D-ribulose 1,5-bisphosphate + CO2 + H2O. It carries out the reaction D-ribulose 1,5-bisphosphate + O2 = 2-phosphoglycolate + (2R)-3-phosphoglycerate + 2 H(+). RuBisCO catalyzes two reactions: the carboxylation of D-ribulose 1,5-bisphosphate, the primary event in carbon dioxide fixation, as well as the oxidative fragmentation of the pentose substrate in the photorespiration process. Both reactions occur simultaneously and in competition at the same active site. This Euryale ferox (Gorgon plant) protein is Ribulose bisphosphate carboxylase large chain (rbcL).